We begin with the raw amino-acid sequence, 51 residues long: CQQPVKPGLCEAYIPRFFYNTSSKQCEKFIYGGCGGNSNRFLTMKACQDKC.

3 disulfide bridges follow: Cys-1-Cys-51, Cys-10-Cys-34, and Cys-26-Cys-47.

Belongs to the venom Kunitz-type family. Sea anemone type 2 potassium channel toxin subfamily.

The protein localises to the secreted. The protein resides in the nematocyst. Its function is as follows. Potent toxin and weak serine protease inhibitor that displays activity on both trypsin and elastase. May act as a neurotoxin by blocking voltage-gated potassium channels (Kv1.1/KCNA1 and Kv1.2/KCNA2). Has a neuroprotective effect, since it suppress, at low concentration, the 6-hydroxydopamine-induced neurotoxicity on the locomotive behavior of zebrafish. In vivo, has strong reversible antilocomotor activity. In addition, it is lethal to zebrafish larvae at high doses. This chain is Kunitz-like toxin PcKuz3, found in Palythoa caribaeorum (White encrusting zoanthid coral).